The sequence spans 109 residues: Set1 complex component sdc1 (109 aa).

Residues 49 to 109 (QQKQKEIVNQ…SSNPGKNSAS (61 aa)) form a disordered region. The span at 73 to 87 (STPTMAEQVQTSFSN) shows a compositional bias: polar residues. A compositionally biased stretch (low complexity) spans 88 to 101 (PASTPLTQTSSPSS).

The protein belongs to the dpy-30 family. As to quaternary structure, component of the COMPASS (Set1C) complex composed of ash2, sdc1, set1, shg1, spp1, swd1, swd2 and swd3. Component of the Lid2 complex composed of ash2, jmj3, lid2, sdc1 and snt2.

The protein localises to the nucleus. The COMPASS (Set1C) complex specifically mono-, di- and trimethylates histone H3 to form H3K4me1/2/3, which subsequently activates gene expression by regulating transcription elongation and plays a role in telomere length maintenance. The polypeptide is Set1 complex component sdc1 (sdc1) (Schizosaccharomyces pombe (strain 972 / ATCC 24843) (Fission yeast)).